A 138-amino-acid chain; its full sequence is Acidic phospholipase A2 PL1 (138 aa).

The N-terminal stretch at M1–G16 is a signal peptide. 7 disulfides stabilise this stretch: C42–C131, C44–C60, C59–C111, C65–C138, C66–C104, C73–C97, and C91–C102. Y43, G45, and G47 together coordinate Ca(2+). H63 is an active-site residue. D64 serves as a coordination point for Ca(2+). The active site involves D105.

This sequence belongs to the phospholipase A2 family. Group II subfamily. D49 sub-subfamily. Requires Ca(2+) as cofactor. Expressed by the venom gland.

Its subcellular location is the secreted. It carries out the reaction a 1,2-diacyl-sn-glycero-3-phosphocholine + H2O = a 1-acyl-sn-glycero-3-phosphocholine + a fatty acid + H(+). Its function is as follows. PLA2 catalyzes the calcium-dependent hydrolysis of the 2-acyl groups in 3-sn-phosphoglycerides. The sequence is that of Acidic phospholipase A2 PL1 from Vipera renardi (Steppe viper).